The primary structure comprises 342 residues: Flagellar P-ring protein (342 aa).

A signal peptide spans 1–19 (MKRVFLWLIFVLAFHKLLA).

It belongs to the FlgI family. The basal body constitutes a major portion of the flagellar organelle and consists of four rings (L,P,S, and M) mounted on a central rod.

The protein resides in the periplasm. It is found in the bacterial flagellum basal body. Assembles around the rod to form the L-ring and probably protects the motor/basal body from shearing forces during rotation. The polypeptide is Flagellar P-ring protein (Helicobacter pylori (strain G27)).